A 214-amino-acid polypeptide reads, in one-letter code: Phosphatidylserine decarboxylase proenzyme (214 aa).

The active-site Schiff-base intermediate with substrate; via pyruvic acid is serine 183. A Pyruvic acid (Ser); by autocatalysis modification is found at serine 183.

Belongs to the phosphatidylserine decarboxylase family. PSD-A subfamily. Heterodimer of a large membrane-associated beta subunit and a small pyruvoyl-containing alpha subunit. Pyruvate serves as cofactor. Is synthesized initially as an inactive proenzyme. Formation of the active enzyme involves a self-maturation process in which the active site pyruvoyl group is generated from an internal serine residue via an autocatalytic post-translational modification. Two non-identical subunits are generated from the proenzyme in this reaction, and the pyruvate is formed at the N-terminus of the alpha chain, which is derived from the carboxyl end of the proenzyme. The post-translation cleavage follows an unusual pathway, termed non-hydrolytic serinolysis, in which the side chain hydroxyl group of the serine supplies its oxygen atom to form the C-terminus of the beta chain, while the remainder of the serine residue undergoes an oxidative deamination to produce ammonia and the pyruvoyl prosthetic group on the alpha chain.

The protein resides in the cell membrane. The catalysed reaction is a 1,2-diacyl-sn-glycero-3-phospho-L-serine + H(+) = a 1,2-diacyl-sn-glycero-3-phosphoethanolamine + CO2. The protein operates within phospholipid metabolism; phosphatidylethanolamine biosynthesis; phosphatidylethanolamine from CDP-diacylglycerol: step 2/2. Functionally, catalyzes the formation of phosphatidylethanolamine (PtdEtn) from phosphatidylserine (PtdSer). This chain is Phosphatidylserine decarboxylase proenzyme, found in Chlorobaculum parvum (strain DSM 263 / NCIMB 8327) (Chlorobium vibrioforme subsp. thiosulfatophilum).